A 358-amino-acid chain; its full sequence is uncharacterized protein (358 aa).

Positions 1–15 (MITGKTISLPLSVIA) are cleaved as a signal peptide. Residue C16 is the site of N-palmitoyl cysteine attachment. The S-diacylglycerol cysteine moiety is linked to residue C16. The disordered stretch occupies residues 331-358 (PCGTGSPGNPPPNINSVAQHRISTNTNR). Over residues 347–358 (VAQHRISTNTNR) the composition is skewed to polar residues.

The protein localises to the cell membrane. This is an uncharacterized protein from Sinorhizobium fredii (strain NBRC 101917 / NGR234).